Consider the following 258-residue polypeptide: 3-deoxy-manno-octulosonate cytidylyltransferase (258 aa).

Belongs to the KdsB family.

The protein localises to the cytoplasm. It carries out the reaction 3-deoxy-alpha-D-manno-oct-2-ulosonate + CTP = CMP-3-deoxy-beta-D-manno-octulosonate + diphosphate. The protein operates within nucleotide-sugar biosynthesis; CMP-3-deoxy-D-manno-octulosonate biosynthesis; CMP-3-deoxy-D-manno-octulosonate from 3-deoxy-D-manno-octulosonate and CTP: step 1/1. Its pathway is bacterial outer membrane biogenesis; lipopolysaccharide biosynthesis. Activates KDO (a required 8-carbon sugar) for incorporation into bacterial lipopolysaccharide in Gram-negative bacteria. This is 3-deoxy-manno-octulosonate cytidylyltransferase from Blochmanniella floridana.